The following is a 526-amino-acid chain: Cytochrome P450 4F5 (526 aa).

A heme-binding site is contributed by Cys470.

It belongs to the cytochrome P450 family. The cofactor is heme. In terms of tissue distribution, high expression in liver and kidney. Lower expression in brain.

The protein resides in the endoplasmic reticulum membrane. Its subcellular location is the microsome membrane. The catalysed reaction is an organic molecule + reduced [NADPH--hemoprotein reductase] + O2 = an alcohol + oxidized [NADPH--hemoprotein reductase] + H2O + H(+). This Rattus norvegicus (Rat) protein is Cytochrome P450 4F5 (Cyp4f5).